Here is a 336-residue protein sequence, read N- to C-terminus: NEDD4 family-interacting protein 2 (336 aa).

Disordered stretches follow at residues 1–24 (MARR…RGAP) and 37–156 (SAAA…SITV). Topologically, residues 1–231 (MARRRSQRVC…ADQLRVGNDG (231 aa)) are cytoplasmic. Positions 37-48 (SAAAAGATGSEE) are enriched in low complexity. The segment covering 78-99 (EHGEDSLSRKPDPEPGRMDHHQ) has biased composition (basic and acidic residues). Positions 148–151 (PPPY) are interaction with NEDD4. The PPxY motif 1 signature appears at 148–151 (PPPY). Tyr151, Tyr167, Tyr171, and Tyr177 each carry phosphotyrosine; by SRC. 2 consecutive short sequence motifs (PPxY motif) follow at residues 174 to 177 (PPPY) and 184 to 186 (PTY). The chain crosses the membrane as a helical span at residues 232 to 252 (IFMLAFFMAFIFNWLGFCLSF). At 253-257 (CITNT) the chain is on the extracellular side. The helical transmembrane segment at 258–278 (IAGRYGAICGFGLSLIKWILI) threads the bilayer. The Cytoplasmic segment spans residues 279–287 (VRFSDYFTG). Residues 288 to 308 (YFNGQYWLWWIFLVLGLLLFF) traverse the membrane as a helical segment. Residues 309 to 336 (RGFVNYLKVRNMSESMAAAHRTRYFFLL) lie on the Extracellular side of the membrane.

Forms heterodimers with NDFIP1. Interacts with HECT domain-containing E3 ubiquitin-protein ligases, including NEDD4. Interacts with NEDD4L. Interacts with PTEN. When phosphorylated at Tyr-167, interacts with SRC and LYN SH2 domain. May thus act as a scaffold that recruits SRC to NDFIP1, enhancing NDFIP1 phosphorylation. Interacts with SLC11A2/DMT1. May interact with phosphorylated EGFR. Interacts with KCNH2. Ubiquitinated by NEDD4 and ITCH. Also ubiquitinated by NEDD4L. Ubiquitination by NEDD4 or NEDD4L does not affect turnover. In terms of processing, undergoes transient tyrosine-phosphorylation following EGF stimulation, most probably catalyzed by SRC. Phosphorylation on Tyr-151, Tyr-171 and Tyr-177 are dependent on the phosphorylation on Tyr-167. Also phosphorylated by LYN and FYN. Expressed in brain, lung, heart, skeletal muscle, kidney, liver and placenta.

The protein localises to the endosome membrane. It localises to the golgi apparatus membrane. It is found in the endosome. Its subcellular location is the multivesicular body membrane. Activates HECT domain-containing E3 ubiquitin-protein ligases, including ITCH, NEDD4, NEDD4L, SMURF2, WWP1 and WWP2, and consequently modulates the stability of their targets. As a result, may control many cellular processes. Recruits ITCH, NEDD4 and SMURF2 to endosomal membranes. Negatively regulates KCNH2 potassium channel activity by decreasing its cell-surface expression and interfering with channel maturation through recruitment of NEDD4L to the Golgi apparatus and multivesicular body where it mediates KCNH2 degradation. May modulate EGFR signaling. Together with NDFIP1, limits the cytokine signaling and expansion of effector Th2 T-cells by promoting degradation of JAK1, probably by ITCH- and NEDD4L-mediated ubiquitination. This is NEDD4 family-interacting protein 2 (NDFIP2) from Homo sapiens (Human).